We begin with the raw amino-acid sequence, 320 residues long: Ribosome biogenesis protein BRX1 homolog 2 (320 aa).

Residues 1-40 (MGRKRKHSETEAPAPVKKSDEPAPDRPKRTLLGWKDKSEG) are disordered. The span at 17 to 40 (KKSDEPAPDRPKRTLLGWKDKSEG) shows a compositional bias: basic and acidic residues. Residues 57 to 260 (EKVLVTCSRR…PIKIFAGSFG (204 aa)) form the Brix domain. The tract at residues 297 to 320 (RKKMHELSNPLEPDEFADMWKDDE) is disordered. A compositionally biased stretch (acidic residues) spans 308–320 (EPDEFADMWKDDE).

This sequence belongs to the BRX1 family. Expressed in roots, rosette leaves, stems, flowers, siliques and seeds.

Its subcellular location is the nucleus. The protein localises to the nucleolus. Functionally, involved in pre-rRNA processing and required for biogenesis of the large (60S) ribosomal subunit. Required for proper development. This chain is Ribosome biogenesis protein BRX1 homolog 2, found in Arabidopsis thaliana (Mouse-ear cress).